We begin with the raw amino-acid sequence, 228 residues long: uncharacterized protein (228 aa).

Residues serine 194–glutamate 228 form a disordered region.

This is an uncharacterized protein from Treponema pallidum (strain Nichols).